We begin with the raw amino-acid sequence, 306 residues long: D-glucosamine-6-phosphate 4-epimerase (306 aa).

The 135-residue stretch at 19-153 (DIPGVKTAEK…TGSNYRVQDL (135 aa)) folds into the SIS domain. Catalysis depends on E200, which acts as the Proton acceptor. Catalysis depends on H216, which acts as the Proton donor. R296 serves as the catalytic Proton acceptor.

It belongs to the PGI/PMI family.

The enzyme catalyses D-glucosamine 6-phosphate = D-galactosamine 6-phosphate. Its function is as follows. Involved in the synthesis of UDP-N-acetylgalactosamine (UDP-GalNAc). Catalyzes the conversion of glucosamine-6-phosphate (GlcN-6-P) to galactosamine-6-phosphate (GalN-6-P). The protein is D-glucosamine-6-phosphate 4-epimerase of Sulfolobus acidocaldarius (strain ATCC 33909 / DSM 639 / JCM 8929 / NBRC 15157 / NCIMB 11770).